A 592-amino-acid polypeptide reads, in one-letter code: Aspartate--tRNA(Asp/Asn) ligase (592 aa).

An L-aspartate-binding site is contributed by glutamate 172. An aspartate region spans residues 196–199; it reads QLFK. Arginine 218 serves as a coordination point for L-aspartate. ATP is bound by residues 218-220 and glutamine 227; that span reads RDE. Histidine 442 contributes to the L-aspartate binding site. Glutamate 476 contacts ATP. An L-aspartate-binding site is contributed by arginine 483. An ATP-binding site is contributed by 528–531; the sequence is GWDR. The tract at residues 553–592 is disordered; that stretch reads SGTDPLTGAPTPITPEQRKEAGIDADPYAAAGRPPGRQSA.

This sequence belongs to the class-II aminoacyl-tRNA synthetase family. Type 1 subfamily. As to quaternary structure, homodimer.

It localises to the cytoplasm. It catalyses the reaction tRNA(Asx) + L-aspartate + ATP = L-aspartyl-tRNA(Asx) + AMP + diphosphate. Functionally, aspartyl-tRNA synthetase with relaxed tRNA specificity since it is able to aspartylate not only its cognate tRNA(Asp) but also tRNA(Asn). Reaction proceeds in two steps: L-aspartate is first activated by ATP to form Asp-AMP and then transferred to the acceptor end of tRNA(Asp/Asn). This Acidothermus cellulolyticus (strain ATCC 43068 / DSM 8971 / 11B) protein is Aspartate--tRNA(Asp/Asn) ligase.